We begin with the raw amino-acid sequence, 737 residues long: Catalase-peroxidase (737 aa).

A cross-link (tryptophyl-tyrosyl-methioninium (Trp-Tyr) (with M-245)) is located at residues 89–219; the sequence is WHSAGTYRVF…LAASHMGLIY (131 aa). H90 functions as the Proton acceptor in the catalytic mechanism. The segment at residues 219 to 245 is a cross-link (tryptophyl-tyrosyl-methioninium (Tyr-Met) (with W-89)); sequence YVNPEGPNGNPDPKAAARDIRVTFGRM. H260 provides a ligand contact to heme b.

The protein belongs to the peroxidase family. Peroxidase/catalase subfamily. In terms of assembly, homodimer or homotetramer. Heme b is required as a cofactor. Formation of the three residue Trp-Tyr-Met cross-link is important for the catalase, but not the peroxidase activity of the enzyme.

The protein resides in the cytoplasm. The catalysed reaction is H2O2 + AH2 = A + 2 H2O. It carries out the reaction 2 H2O2 = O2 + 2 H2O. Functionally, bifunctional enzyme with both catalase and broad-spectrum peroxidase activity. This Aspergillus terreus (strain NIH 2624 / FGSC A1156) protein is Catalase-peroxidase.